We begin with the raw amino-acid sequence, 596 residues long: Cysteine--tRNA ligase (596 aa).

The interval 1–199 (MKSKTFLEKN…SQRYFEELRK (199 aa)) is unknown. Residue Cys212 coordinates Zn(2+). The 'HIGH' region motif lies at 214–224 (PTVYDEVHIGN). Residues Cys377, His403, and Glu407 each coordinate Zn(2+). Residues 435-439 (KMSKS) carry the 'KMSKS' region motif. An ATP-binding site is contributed by Lys438.

It belongs to the class-I aminoacyl-tRNA synthetase family. In terms of assembly, monomer. The cofactor is Zn(2+).

Its subcellular location is the cytoplasm. The catalysed reaction is tRNA(Cys) + L-cysteine + ATP = L-cysteinyl-tRNA(Cys) + AMP + diphosphate. This chain is Cysteine--tRNA ligase (cysS), found in Mycoplasmopsis pulmonis (strain UAB CTIP) (Mycoplasma pulmonis).